Here is a 396-residue protein sequence, read N- to C-terminus: Flap endonuclease 1 (396 aa).

Residues 1-104 are N-domain; it reads MGIKHLYQLI…GELAKRFQRK (104 aa). Residue Asp34 coordinates Mg(2+). DNA is bound by residues Arg47 and Arg70. Asp86, Glu158, Glu160, Asp179, and Asp181 together coordinate Mg(2+). The tract at residues 122–255 is I-domain; that stretch reads DVEKFSRRTV…STALKLIRDH (134 aa). Glu158 contacts DNA. DNA is bound by residues Gly233 and Asp235. Asp235 is a Mg(2+) binding site. The tract at residues 338–396 is disordered; that stretch reads MKSAQQSRLEGFFKPVERTPEEKASLKRKADEKLSEKKKKQKEEAKAKKQAKSKPRTAG. The segment at 342 to 350 is interaction with PCNA; the sequence is QQSRLEGFF. Basic and acidic residues predominate over residues 352-384; sequence PVERTPEEKASLKRKADEKLSEKKKKQKEEAKA. Residues 385–396 show a composition bias toward basic residues; sequence KKQAKSKPRTAG.

Belongs to the XPG/RAD2 endonuclease family. FEN1 subfamily. As to quaternary structure, interacts with PCNA. Three molecules of FEN1 bind to one PCNA trimer with each molecule binding to one PCNA monomer. PCNA stimulates the nuclease activity without altering cleavage specificity. Requires Mg(2+) as cofactor. Post-translationally, phosphorylated. Phosphorylation upon DNA damage induces relocalization to the nuclear plasma.

It is found in the nucleus. It localises to the nucleolus. The protein resides in the nucleoplasm. Its subcellular location is the mitochondrion. Its function is as follows. Structure-specific nuclease with 5'-flap endonuclease and 5'-3' exonuclease activities involved in DNA replication and repair. During DNA replication, cleaves the 5'-overhanging flap structure that is generated by displacement synthesis when DNA polymerase encounters the 5'-end of a downstream Okazaki fragment. It enters the flap from the 5'-end and then tracks to cleave the flap base, leaving a nick for ligation. Also involved in the long patch base excision repair (LP-BER) pathway, by cleaving within the apurinic/apyrimidinic (AP) site-terminated flap. Acts as a genome stabilization factor that prevents flaps from equilibrating into structures that lead to duplications and deletions. Also possesses 5'-3' exonuclease activity on nicked or gapped double-stranded DNA, and exhibits RNase H activity. Also involved in replication and repair of rDNA and in repairing mitochondrial DNA. The protein is Flap endonuclease 1 of Phaeosphaeria nodorum (strain SN15 / ATCC MYA-4574 / FGSC 10173) (Glume blotch fungus).